A 227-amino-acid polypeptide reads, in one-letter code: Ribose-5-phosphate isomerase A (227 aa).

Substrate-binding positions include 26–29 (TGST), 82–85 (DGAD), and 95–98 (KGGG). Residue Glu-104 is the Proton acceptor of the active site. Lys-122 serves as a coordination point for substrate.

Belongs to the ribose 5-phosphate isomerase family. Homodimer.

The catalysed reaction is aldehydo-D-ribose 5-phosphate = D-ribulose 5-phosphate. It functions in the pathway carbohydrate degradation; pentose phosphate pathway; D-ribose 5-phosphate from D-ribulose 5-phosphate (non-oxidative stage): step 1/1. Functionally, catalyzes the reversible conversion of ribose-5-phosphate to ribulose 5-phosphate. The protein is Ribose-5-phosphate isomerase A of Streptococcus pneumoniae (strain ATCC 700669 / Spain 23F-1).